Reading from the N-terminus, the 525-residue chain is Estrogen receptor (525 aa).

The disordered stretch occupies residues 1–59 (PTSPLVFVPSSPRLSPFMHPPSHHYLETTSTPVYRSSVSSSQQQLSREDQCGTSDDSYS). The tract at residues 1-82 (PTSPLVFVPS…GFEMAKEMRF (82 aa)) is modulating. Residues 36–45 (SSVSSSQQQL) are compositionally biased toward low complexity. 2 consecutive NR C4-type zinc fingers follow at residues 83 to 103 (CAVC…CEGC) and 119 to 143 (CPAT…LRKC). Residues 83–148 (CAVCSDYASG…RLRKCYQVGM (66 aa)) constitute a DNA-binding region (nuclear receptor). The interval 149–209 (MKGGVRKDRG…GGGKSSIIGM (61 aa)) is hinge. The span at 154-182 (RKDRGRVLRRDKRRTGTSDKASKDLEHRT) shows a compositional bias: basic and acidic residues. Residues 154–203 (RKDRGRVLRRDKRRTGTSDKASKDLEHRTAPPQDRRKHSSSSSSAGGGGK) form a disordered region. The 237-residue stretch at 210-446 (SPDQVLLLLQ…DLLLEMLDAH (237 aa)) folds into the NR LBD domain. A compositionally biased stretch (basic and acidic residues) spans 452–465 (DRPAESWSQADREP). The segment at 452–525 (DRPAESWSQA…GPRSDCTHIL (74 aa)) is disordered. The span at 479–493 (SGGGDGGPSSAGSGS) shows a compositional bias: gly residues.

The protein belongs to the nuclear hormone receptor family. NR3 subfamily. In terms of assembly, binds DNA as a homodimer. Can form a heterodimer with ER-beta. As to expression, abundant in the liver, less abundant in the testes and barely detectable in the ovary and brain.

The protein resides in the nucleus. Its function is as follows. The steroid hormones and their receptors are involved in the regulation of eukaryotic gene expression and affect cellular proliferation and differentiation in target tissues. The chain is Estrogen receptor (esr1) from Micropogonias undulatus (Atlantic croaker).